A 367-amino-acid polypeptide reads, in one-letter code: Phosphoribosylaminoimidazole-succinocarboxamide synthase (367 aa).

Belongs to the SAICAR synthetase family.

It carries out the reaction 5-amino-1-(5-phospho-D-ribosyl)imidazole-4-carboxylate + L-aspartate + ATP = (2S)-2-[5-amino-1-(5-phospho-beta-D-ribosyl)imidazole-4-carboxamido]succinate + ADP + phosphate + 2 H(+). It participates in purine metabolism; IMP biosynthesis via de novo pathway; 5-amino-1-(5-phospho-D-ribosyl)imidazole-4-carboxamide from 5-amino-1-(5-phospho-D-ribosyl)imidazole-4-carboxylate: step 1/2. The chain is Phosphoribosylaminoimidazole-succinocarboxamide synthase from Saccharophagus degradans (strain 2-40 / ATCC 43961 / DSM 17024).